The chain runs to 139 residues: Actin-depolymerizing factor 3 (139 aa).

The 135-residue stretch at 5 to 139 folds into the ADF-H domain; the sequence is ASGMAVHDDC…DLDVFKSRAN (135 aa). Phosphoserine is present on Ser6.

This sequence belongs to the actin-binding proteins ADF family.

Its subcellular location is the cytoplasm. The protein resides in the cytoskeleton. In terms of biological role, actin-depolymerizing protein. Severs actin filaments (F-actin) and binds to actin monomers. This chain is Actin-depolymerizing factor 3 (ADF3), found in Arabidopsis thaliana (Mouse-ear cress).